Reading from the N-terminus, the 332-residue chain is Cysteine and histidine-rich domain-containing protein 1 (332 aa).

Ala-2 carries the N-acetylalanine modification. The tract at residues 2–77 (ALLCYNRACG…KPPEPVKPEV (76 aa)) is interaction with PPP5C. The Zn(2+) site is built by Cys-5, Cys-10, Cys-24, His-27, Cys-42, and Cys-43. 2 CHORD domains span residues 5-64 (CYNR…KGRH) and 157-216 (CKNG…KGRH). Thr-47 bears the Phosphothreonine mark. Phosphoserine is present on Ser-51. Positions 59, 64, 157, 162, 176, 179, 194, 195, 211, and 216 each coordinate Zn(2+). The interval 62–82 (GRHNSEKPPEPVKPEVKTTEK) is disordered. Basic and acidic residues predominate over residues 64-82 (HNSEKPPEPVKPEVKTTEK). Positions 65 to 316 (NSEKPPEPVK…AEPMQWASLE (252 aa)) are interaction with HSP90AA1 and HSP90AB1. Residues 227-316 (VVPCRHDWHQ…AEPMQWASLE (90 aa)) enclose the CS domain.

In terms of assembly, interacts with HSP90AA1, HSP90AB1, PPP5C, ROCK1 and ROCK2.

Regulates centrosome duplication, probably by inhibiting the kinase activity of ROCK2. Proposed to act as co-chaperone for HSP90. May play a role in the regulation of NOD1 via a HSP90 chaperone complex. In vitro, has intrinsic chaperone activity. This function may be achieved by inhibiting association of ROCK2 with NPM1. Plays a role in ensuring the localization of the tyrosine kinase receptor EGFR to the plasma membrane, and thus ensures the subsequent regulation of EGFR activity and EGF-induced actin cytoskeleton remodeling. Involved in stress response. Prevents tumorigenesis. This Macaca fascicularis (Crab-eating macaque) protein is Cysteine and histidine-rich domain-containing protein 1 (CHORDC1).